The sequence spans 134 residues: Large ribosomal subunit protein uL22 (134 aa).

The protein belongs to the universal ribosomal protein uL22 family. As to quaternary structure, part of the 50S ribosomal subunit.

Its function is as follows. This protein binds specifically to 23S rRNA; its binding is stimulated by other ribosomal proteins, e.g. L4, L17, and L20. It is important during the early stages of 50S assembly. It makes multiple contacts with different domains of the 23S rRNA in the assembled 50S subunit and ribosome. Functionally, the globular domain of the protein is located near the polypeptide exit tunnel on the outside of the subunit, while an extended beta-hairpin is found that lines the wall of the exit tunnel in the center of the 70S ribosome. This Rhodococcus erythropolis (strain PR4 / NBRC 100887) protein is Large ribosomal subunit protein uL22.